A 145-amino-acid polypeptide reads, in one-letter code: MIALIQRVTRASVTVEDEVTGEIGPGLLVLLGVEKEDDEQKANRLCERVLGYRIFSDADGKMNLNVQQAGGSVLVVSQFTLAADTERGMRPSFSGGAAPDRAQALYEYFVERCRQQAINTQTGRFAADMQVELVNDGPVTFWLQV.

The Gly-cisPro motif, important for rejection of L-amino acids motif lies at 137–138; the sequence is GP.

Belongs to the DTD family. Homodimer.

It localises to the cytoplasm. The enzyme catalyses glycyl-tRNA(Ala) + H2O = tRNA(Ala) + glycine + H(+). It carries out the reaction a D-aminoacyl-tRNA + H2O = a tRNA + a D-alpha-amino acid + H(+). In terms of biological role, an aminoacyl-tRNA editing enzyme that deacylates mischarged D-aminoacyl-tRNAs. Also deacylates mischarged glycyl-tRNA(Ala), protecting cells against glycine mischarging by AlaRS. Acts via tRNA-based rather than protein-based catalysis; rejects L-amino acids rather than detecting D-amino acids in the active site. By recycling D-aminoacyl-tRNA to D-amino acids and free tRNA molecules, this enzyme counteracts the toxicity associated with the formation of D-aminoacyl-tRNA entities in vivo and helps enforce protein L-homochirality. The chain is D-aminoacyl-tRNA deacylase from Salmonella choleraesuis (strain SC-B67).